Here is a 125-residue protein sequence, read N- to C-terminus: MPTLNQLIRHGREEKRRTDRTRASDQCPQKQGVRPRVPTRTPKKPNSAPRKIAKVRLSNRHDIFAHIPGEGHNSQEHPMVLIRGGRVKDSPGVKSHRIRGVKDLLGIPNRRRGRSKYGAERPKSI.

Disordered stretches follow at residues 1-50 (MPTL…SAPR) and 106-125 (GIPN…PKSI). The span at 10 to 23 (HGREEKRRTDRTRA) shows a compositional bias: basic and acidic residues.

It belongs to the universal ribosomal protein uS12 family.

The protein localises to the mitochondrion. Protein S12 is involved in the translation initiation step. The chain is Small ribosomal subunit protein uS12m (RPS12) from Magnolia soulangeana (Saucer magnolia).